The sequence spans 187 residues: Ribosome-recycling factor (187 aa).

It belongs to the RRF family.

It localises to the cytoplasm. Functionally, responsible for the release of ribosomes from messenger RNA at the termination of protein biosynthesis. May increase the efficiency of translation by recycling ribosomes from one round of translation to another. This Roseobacter denitrificans (strain ATCC 33942 / OCh 114) (Erythrobacter sp. (strain OCh 114)) protein is Ribosome-recycling factor.